Here is a 348-residue protein sequence, read N- to C-terminus: Nicotinate-nucleotide--dimethylbenzimidazole phosphoribosyltransferase (348 aa).

The active-site Proton acceptor is Glu-315.

It belongs to the CobT family.

The catalysed reaction is 5,6-dimethylbenzimidazole + nicotinate beta-D-ribonucleotide = alpha-ribazole 5'-phosphate + nicotinate + H(+). It functions in the pathway nucleoside biosynthesis; alpha-ribazole biosynthesis; alpha-ribazole from 5,6-dimethylbenzimidazole: step 1/2. Catalyzes the synthesis of alpha-ribazole-5'-phosphate from nicotinate mononucleotide (NAMN) and 5,6-dimethylbenzimidazole (DMB). The chain is Nicotinate-nucleotide--dimethylbenzimidazole phosphoribosyltransferase from Dechloromonas aromatica (strain RCB).